Here is a 385-residue protein sequence, read N- to C-terminus: Chaperone protein DnaJ 2 (385 aa).

A J domain is found at 10–75 (DYYKELGVSS…AKRKEYDETR (66 aa)). Residues 155–233 (GVTVPLRMTS…CHGSGIQNRT (79 aa)) form a CR-type zinc finger. Residues Cys168, Cys171, Cys185, Cys188, Cys207, Cys210, Cys221, and Cys224 each contribute to the Zn(2+) site. CXXCXGXG motif repeat units follow at residues 168-175 (CTTCHGSG), 185-192 (CPICNGTG), 207-214 (CDGCRGTG), and 221-228 (CVDCHGSG).

The protein belongs to the DnaJ family. Homodimer. Zn(2+) is required as a cofactor.

It localises to the cytoplasm. Functionally, participates actively in the response to hyperosmotic and heat shock by preventing the aggregation of stress-denatured proteins and by disaggregating proteins, also in an autonomous, DnaK-independent fashion. Unfolded proteins bind initially to DnaJ; upon interaction with the DnaJ-bound protein, DnaK hydrolyzes its bound ATP, resulting in the formation of a stable complex. GrpE releases ADP from DnaK; ATP binding to DnaK triggers the release of the substrate protein, thus completing the reaction cycle. Several rounds of ATP-dependent interactions between DnaJ, DnaK and GrpE are required for fully efficient folding. Also involved, together with DnaK and GrpE, in the DNA replication of plasmids through activation of initiation proteins. This is Chaperone protein DnaJ 2 from Nocardia farcinica (strain IFM 10152).